A 466-amino-acid chain; its full sequence is Putative ABC transporter ATP-binding protein MG065 (466 aa).

The region spanning 233–463 (IELKNVYKYI…NLNPKQVEEI (231 aa)) is the ABC transporter domain. Position 269 to 276 (269 to 276 (GPSGSGKT)) interacts with ATP.

Belongs to the ABC transporter superfamily.

The polypeptide is Putative ABC transporter ATP-binding protein MG065 (Mycoplasma genitalium (strain ATCC 33530 / DSM 19775 / NCTC 10195 / G37) (Mycoplasmoides genitalium)).